We begin with the raw amino-acid sequence, 329 residues long: Two pore potassium channel protein sup-9 (329 aa).

Residues 1 to 8 (MKRQNIRT) lie on the Cytoplasmic side of the membrane. Residues 9–29 (LSLIVCTLTYLLVGAAVFDAL) form a helical membrane-spanning segment. N-linked (GlcNAc...) asparagine glycosylation occurs at asparagine 53. The pore-forming intramembrane region spans 80 to 100 (FSGAFYFATTVITTIGYGHST). The Selectivity filter motif lies at 93–98 (TIGYGH). The helical transmembrane segment at 108-128 (VFCMLYALAGIPLGLIMFQSI) threads the bilayer. At 129 to 157 (GERMNTFAAKLLRFIRRAAGKQPIVTSSD) the chain is on the cytoplasmic side. Residues 158-178 (LIIFCTGWGGLLIFGGAFMFS) form a helical membrane-spanning segment. Asparagine 182 carries N-linked (GlcNAc...) asparagine glycosylation. Positions 186–206 (FDAVYYCFVTLTTIGFGDYVA) form an intramembrane region, pore-forming. Positions 198 to 203 (TIGFGD) match the Selectivity filter motif. A helical membrane pass occupies residues 220–240 (VFFSLVFILFGLTVISAAMNL). Residues 241 to 329 (LVLRFLTMNT…FSGMTTRPKY (89 aa)) lie on the Cytoplasmic side of the membrane. A may be important for regulation by and/or interaction with sup-10 region spans residues 289–296 (SLASCSCY). Residues 307–329 (HRKHTEPHGGPPTFSGMTTRPKY) form a disordered region.

The protein belongs to the two pore domain potassium channel (TC 1.A.1.8) family. As to quaternary structure, may form a complex with the regulatory subunits unc-93 and sup-10. Low levels along surface of body-wall muscle cells, in vulval and intestinal muscles and, more weakly, in anal depressor and sphincter muscles. Also expressed in a subset of head neurons.

The protein resides in the membrane. Functionally, potassium channel involved in coordination of muscle contraction. Activity is regulated by sup-18. The sequence is that of Two pore potassium channel protein sup-9 from Caenorhabditis elegans.